A 66-amino-acid chain; its full sequence is UPF0370 protein YpfN (66 aa).

A helical transmembrane segment spans residues 4–24 (LAKYWWILVLVFLVGVLLNVI). The interval 39–66 (KPELPPHRDFNDKWDDEEDWPKKDQPKK) is disordered. Positions 42–51 (LPPHRDFNDK) are enriched in basic and acidic residues.

This sequence belongs to the UPF0370 family.

It is found in the cell membrane. The sequence is that of UPF0370 protein YpfN from Salmonella paratyphi A (strain AKU_12601).